The chain runs to 538 residues: Syncytin-2 (538 aa).

The N-terminal stretch at 1-15 (MGLLLLVLILTPSLA) is a signal peptide. Over 16 to 478 (AYRHPDFPLL…GWLNWEGTWK (463 aa)) the chain is Extracellular. Residues 43–46 (CWLC) carry the CXXC motif. Disulfide bonds link cysteine 43–cysteine 46, cysteine 43–cysteine 439, and cysteine 431–cysteine 438. Asparagine 133, asparagine 146, asparagine 177, asparagine 220, asparagine 241, asparagine 247, asparagine 312, and asparagine 332 each carry an N-linked (GlcNAc...) asparagine glycan. Residues 354–374 (FIPLLAGLGILAGTGTGIAGI) are fusion peptide. The CKS-17 signature appears at 414–430 (LQNRRGLDMLTAAQGGI). Residues 431–439 (CLALDEKCC) carry the CX6CC motif. N-linked (GlcNAc...) asparagine glycosylation is present at asparagine 443. A helical membrane pass occupies residues 479-499 (WFSWVLPLTGPLVSLLLLLLF). Residues 500-538 (GPCLLNLITQFVSSRLQAIKLQTNLSAGRRPRNIQESPF) are Cytoplasmic-facing.

It belongs to the gamma type-C retroviral envelope protein family. HERV class-I FRD env subfamily. The surface and transmembrane proteins form a heterodimer. They are attached by non-covalent interactions or by a labile interchain disulfide bond. Specific enzymatic cleavages in vivo yield the mature SU and TM proteins. Post-translationally, the CXXC motif is highly conserved across a broad range of retroviral envelope proteins. It is thought to participate in the formation of a labile disulfide bond possibly with the CX6CC motif present in the transmembrane protein.

Its subcellular location is the virion. The protein resides in the cell membrane. This endogenous retroviral envelope protein has retained its original fusogenic properties and participates in trophoblast fusion and the formation of a syncytium during placenta morphogenesis. The interaction with MFSD2A is apparently important for this process. Its function is as follows. Endogenous envelope proteins may have kept, lost or modified their original function during evolution but this one can still make pseudotypes with MLV, HIV-1 or SIV-1 virions and confer infectivity. Retroviral envelope proteins mediate receptor recognition and membrane fusion during early infection. The surface protein mediates receptor recognition, while the transmembrane protein anchors the envelope heterodimer to the viral membrane through one transmembrane domain. The other hydrophobic domain, called fusion peptide, mediates fusion of the viral membrane with the target cell membrane. The protein is Syncytin-2 (ERVFRD-1) of Gorilla gorilla gorilla (Western lowland gorilla).